A 374-amino-acid polypeptide reads, in one-letter code: uncharacterized protein (374 aa).

The signal sequence occupies residues Met-1 to Arg-26.

This is an uncharacterized protein from Treponema pallidum (strain Nichols).